The chain runs to 353 residues: Anthranilate phosphoribosyltransferase (353 aa).

Residues Gly-79, 82–83, Thr-87, 89–92, 107–115, and Ser-119 each bind 5-phospho-alpha-D-ribose 1-diphosphate; these read GD, NIST, and KHGNHSFTS. Residue Gly-79 participates in anthranilate binding. Ser-91 is a binding site for Mg(2+). Residue Asn-110 participates in anthranilate binding. Arg-165 lines the anthranilate pocket. Residues Asp-223 and Glu-224 each contribute to the Mg(2+) site.

Belongs to the anthranilate phosphoribosyltransferase family. In terms of assembly, homodimer. Requires Mg(2+) as cofactor.

It catalyses the reaction N-(5-phospho-beta-D-ribosyl)anthranilate + diphosphate = 5-phospho-alpha-D-ribose 1-diphosphate + anthranilate. The protein operates within amino-acid biosynthesis; L-tryptophan biosynthesis; L-tryptophan from chorismate: step 2/5. Its function is as follows. Catalyzes the transfer of the phosphoribosyl group of 5-phosphorylribose-1-pyrophosphate (PRPP) to anthranilate to yield N-(5'-phosphoribosyl)-anthranilate (PRA). This chain is Anthranilate phosphoribosyltransferase, found in Methanococcoides burtonii (strain DSM 6242 / NBRC 107633 / OCM 468 / ACE-M).